Consider the following 156-residue polypeptide: MKSLQKGFTLIELMIVVAIIGILAAIAIPQYQNYIARSQVSRVMSETGQMRTAIETCVLDGKEAGECFIGWTGSNLLDGDFTAGTESTAAATGQAGITIKYPVAADDEGNIVATFGRNAAAAIKPQTLTWSRSKEGTWTCATTVEAKFQPTGCKDK.

A propeptide spans 1–7 (MKSLQKG) (leader sequence). N-methylphenylalanine is present on F8. A helical transmembrane segment spans residues 8-28 (FTLIELMIVVAIIGILAAIAI). Cystine bridges form between C57–C67 and C140–C153.

It belongs to the N-Me-Phe pilin family. As to quaternary structure, the pili are polar flexible filaments of about 5.4 nanometers diameter and 2.5 micrometers average length; they consist of only a single polypeptide chain arranged in a helical configuration of five subunits per turn in the assembled pilus.

The protein resides in the fimbrium. Its subcellular location is the membrane. In terms of biological role, major component of the type IV fimbriae that plays an essential role in twitching motility, natural transformation, and protease secretion. The protein is Type IV major fimbrial protein FimA (fimA) of Dichelobacter nodosus (Bacteroides nodosus).